Here is a 662-residue protein sequence, read N- to C-terminus: Methionine--tRNA ligase (662 aa).

Positions 13–23 match the 'HIGH' region motif; the sequence is PYTNGPCHLGH. The Zn(2+) site is built by Cys-144, Cys-147, Cys-156, and Cys-160. The 'KMSKS' region signature appears at 326–330; it reads KFSKS. Lys-329 contributes to the ATP binding site. The tRNA-binding domain maps to 564–662; sequence DFSKVEIKTG…KPVEPGTKIR (99 aa).

This sequence belongs to the class-I aminoacyl-tRNA synthetase family. MetG type 1 subfamily. As to quaternary structure, homodimer. Zn(2+) is required as a cofactor.

Its subcellular location is the cytoplasm. The catalysed reaction is tRNA(Met) + L-methionine + ATP = L-methionyl-tRNA(Met) + AMP + diphosphate. Its function is as follows. Is required not only for elongation of protein synthesis but also for the initiation of all mRNA translation through initiator tRNA(fMet) aminoacylation. This chain is Methionine--tRNA ligase, found in Methanoregula boonei (strain DSM 21154 / JCM 14090 / 6A8).